A 428-amino-acid chain; its full sequence is 3-phosphoshikimate 1-carboxyvinyltransferase (428 aa).

3-phosphoshikimate-binding residues include Lys-20, Ser-21, and Arg-25. Residue Lys-20 participates in phosphoenolpyruvate binding. Phosphoenolpyruvate-binding residues include Gly-92 and Arg-120. Residues Ser-166, Gln-168, Asp-314, and Lys-341 each coordinate 3-phosphoshikimate. A phosphoenolpyruvate-binding site is contributed by Gln-168. Asp-314 functions as the Proton acceptor in the catalytic mechanism. Phosphoenolpyruvate-binding residues include Arg-345 and Arg-387.

It belongs to the EPSP synthase family. As to quaternary structure, monomer.

It is found in the cytoplasm. The catalysed reaction is 3-phosphoshikimate + phosphoenolpyruvate = 5-O-(1-carboxyvinyl)-3-phosphoshikimate + phosphate. Its pathway is metabolic intermediate biosynthesis; chorismate biosynthesis; chorismate from D-erythrose 4-phosphate and phosphoenolpyruvate: step 6/7. In terms of biological role, catalyzes the transfer of the enolpyruvyl moiety of phosphoenolpyruvate (PEP) to the 5-hydroxyl of shikimate-3-phosphate (S3P) to produce enolpyruvyl shikimate-3-phosphate and inorganic phosphate. This is 3-phosphoshikimate 1-carboxyvinyltransferase from Listeria monocytogenes serovar 1/2a (strain ATCC BAA-679 / EGD-e).